The primary structure comprises 135 residues: uncharacterized protein (135 aa).

The interval 1-75 is disordered; sequence MAAATETGQA…PPPRPPQRRC (75 aa).

This is an uncharacterized protein from Homo sapiens (Human).